The sequence spans 256 residues: Major prion protein (256 aa).

The first 24 residues, 1–24, serve as a signal peptide directing secretion; that stretch reads MVKSHIGSWILVLFVAMWSDVGLC. The interval 25–233 is interaction with GRB2, ERI3 and SYN1; sequence KKRPKPGGGW…ESQAYYQRGA (209 aa). The disordered stretch occupies residues 28 to 110; the sequence is PKPGGGWNTG…QWNKPSKPKT (83 aa). Tandem repeats lie at residues 54–62, 63–70, 71–78, 79–86, and 87–95. Residues 54 to 95 are 5 X 8 AA tandem repeats of P-H-G-G-G-W-G-Q; sequence PQGGGGWGQPHGGGWGQPHGGGWGQPHGGGWGQPHGGGGWGQ. Residues 55-97 are compositionally biased toward gly residues; the sequence is QGGGGWGQPHGGGWGQPHGGGWGQPHGGGWGQPHGGGGWGQGG. H64, G65, G66, H72, G73, G74, H80, G81, G82, H88, G90, and G91 together coordinate Cu(2+). C182 and C217 are joined by a disulfide. 2 N-linked (GlcNAc...) (complex) asparagine glycosylation sites follow: N184 and N200. The GPI-anchor amidated alanine moiety is linked to residue A233. The propeptide at 234–256 is removed in mature form; it reads SVILFSSPPVILLISFLIFLIVG.

The protein belongs to the prion family. Monomer and homodimer. Has a tendency to aggregate into amyloid fibrils containing a cross-beta spine, formed by a steric zipper of superposed beta-strands. Soluble oligomers may represent an intermediate stage on the path to fibril formation. Copper binding may promote oligomerization. Interacts with GRB2, APP, ERI3/PRNPIP and SYN1. Mislocalized cytosolically exposed PrP interacts with MGRN1; this interaction alters MGRN1 subcellular location and causes lysosomal enlargement. Interacts with KIAA1191.

The protein localises to the cell membrane. Its subcellular location is the golgi apparatus. Its function is as follows. Its primary physiological function is unclear. Has cytoprotective activity against internal or environmental stresses. May play a role in neuronal development and synaptic plasticity. May be required for neuronal myelin sheath maintenance. May play a role in iron uptake and iron homeostasis. Soluble oligomers are toxic to cultured neuroblastoma cells and induce apoptosis (in vitro). Association with GPC1 (via its heparan sulfate chains) targets PRNP to lipid rafts. Also provides Cu(2+) or Zn(2+) for the ascorbate-mediated GPC1 deaminase degradation of its heparan sulfate side chains. The chain is Major prion protein (PRNP) from Ovis aries (Sheep).